Consider the following 209-residue polypeptide: Endonuclease III (209 aa).

Residues 108–127 form the HhH domain; it reads RTELESLPGVGRKTANIILN. The [4Fe-4S] cluster site is built by cysteine 187, cysteine 194, cysteine 197, and cysteine 203.

Belongs to the Nth/MutY family. Requires [4Fe-4S] cluster as cofactor.

It catalyses the reaction 2'-deoxyribonucleotide-(2'-deoxyribose 5'-phosphate)-2'-deoxyribonucleotide-DNA = a 3'-end 2'-deoxyribonucleotide-(2,3-dehydro-2,3-deoxyribose 5'-phosphate)-DNA + a 5'-end 5'-phospho-2'-deoxyribonucleoside-DNA + H(+). Functionally, DNA repair enzyme that has both DNA N-glycosylase activity and AP-lyase activity. The DNA N-glycosylase activity releases various damaged pyrimidines from DNA by cleaving the N-glycosidic bond, leaving an AP (apurinic/apyrimidinic) site. The AP-lyase activity cleaves the phosphodiester bond 3' to the AP site by a beta-elimination, leaving a 3'-terminal unsaturated sugar and a product with a terminal 5'-phosphate. The protein is Endonuclease III of Buchnera aphidicola subsp. Schizaphis graminum (strain Sg).